We begin with the raw amino-acid sequence, 343 residues long: L-threonine 3-dehydrogenase (343 aa).

Cys40 lines the Zn(2+) pocket. Residues Thr42 and His45 each act as charge relay system in the active site. Zn(2+) is bound by residues His65, Glu66, Cys95, Cys98, Cys101, and Cys109. NAD(+)-binding positions include Ile177, Asp197, Arg202, 264–266, and 288–289; these read LGI and IY.

This sequence belongs to the zinc-containing alcohol dehydrogenase family. In terms of assembly, homotetramer. It depends on Zn(2+) as a cofactor.

Its subcellular location is the cytoplasm. It carries out the reaction L-threonine + NAD(+) = (2S)-2-amino-3-oxobutanoate + NADH + H(+). It functions in the pathway amino-acid degradation; L-threonine degradation via oxydo-reductase pathway; glycine from L-threonine: step 1/2. Catalyzes the NAD(+)-dependent oxidation of L-threonine to 2-amino-3-ketobutyrate. In Vibrio vulnificus (strain CMCP6), this protein is L-threonine 3-dehydrogenase.